A 333-amino-acid chain; its full sequence is MTKIFAYAIREDEKPFLKEWEDAHKDVEVEYTDKLLTPETVALAKGADGVVVYQQLDYTAETLQALADNGITKMSLRNVGVDNIDMAKAKELGFQITNVPVYSPNAIAEHAAIQAARILRQDKAMDEKVARHDLRWAPTIGREVRDQVVGVIGTGHIGQVFMQIMEGFGAKVIAYDIFRNPELEKKGYYVDSLDDLYKQADVISLHVPDVPANVHMINDESIAKMKQDVVIVNVSRGPLVDTDAVIRGLDSGKIFGYAMDVYEGEVGIFNEDWEGKEFPDARLADLIARPNVLVTPHTAFYTTHAVRNMVVKAFDNNLELVEGKEAETPVKVG.

NAD(+)-binding positions include 156–157 (HI), D176, 207–208 (VP), N213, 234–236 (VSR), and D260. R236 is a catalytic residue. E265 is a catalytic residue. H297 (proton donor) is an active-site residue.

Belongs to the D-isomer specific 2-hydroxyacid dehydrogenase family. As to quaternary structure, homodimer.

It carries out the reaction (R)-lactate + NAD(+) = pyruvate + NADH + H(+). The protein is D-lactate dehydrogenase (ldhA) of Lactobacillus delbrueckii subsp. bulgaricus (strain ATCC 11842 / DSM 20081 / BCRC 10696 / JCM 1002 / NBRC 13953 / NCIMB 11778 / NCTC 12712 / WDCM 00102 / Lb 14).